The sequence spans 141 residues: Molybdopterin synthase catalytic subunit 2 (141 aa).

Substrate is bound by residues 37–39, 103–104, Lys119, and 126–128; these read MIR, HR, and KHQ.

The protein belongs to the MoaE family. In terms of assembly, heterotetramer of 2 MoaD subunits and 2 MoaE subunits. Also stable as homodimer. The enzyme changes between these two forms during catalysis.

It carries out the reaction 2 [molybdopterin-synthase sulfur-carrier protein]-C-terminal-Gly-aminoethanethioate + cyclic pyranopterin phosphate + H2O = molybdopterin + 2 [molybdopterin-synthase sulfur-carrier protein]-C-terminal Gly-Gly + 2 H(+). It functions in the pathway cofactor biosynthesis; molybdopterin biosynthesis. Functionally, converts molybdopterin precursor Z into molybdopterin. This requires the incorporation of two sulfur atoms into precursor Z to generate a dithiolene group. The sulfur is provided by MoaD. This Mycobacterium tuberculosis (strain CDC 1551 / Oshkosh) protein is Molybdopterin synthase catalytic subunit 2 (moaE2).